Reading from the N-terminus, the 61-residue chain is MSKHLRITLVKSLIGVAEKHRRVVAGLGLRHTHHSVERLDTPEIRGMVNKVPYLLRWEELS.

Belongs to the universal ribosomal protein uL30 family. In terms of assembly, part of the 50S ribosomal subunit.

This chain is Large ribosomal subunit protein uL30, found in Acidithiobacillus ferrooxidans (strain ATCC 23270 / DSM 14882 / CIP 104768 / NCIMB 8455) (Ferrobacillus ferrooxidans (strain ATCC 23270)).